Consider the following 338-residue polypeptide: Phosphoribosylformylglycinamidine cyclo-ligase (338 aa).

Belongs to the AIR synthase family.

It is found in the cytoplasm. It carries out the reaction 2-formamido-N(1)-(5-O-phospho-beta-D-ribosyl)acetamidine + ATP = 5-amino-1-(5-phospho-beta-D-ribosyl)imidazole + ADP + phosphate + H(+). It functions in the pathway purine metabolism; IMP biosynthesis via de novo pathway; 5-amino-1-(5-phospho-D-ribosyl)imidazole from N(2)-formyl-N(1)-(5-phospho-D-ribosyl)glycinamide: step 2/2. This is Phosphoribosylformylglycinamidine cyclo-ligase from Lactococcus lactis subsp. lactis (strain IL1403) (Streptococcus lactis).